The chain runs to 449 residues: Putative BTB/POZ domain-containing protein L742 (449 aa).

The region spanning E79–G148 is the BTB domain.

It belongs to the mimivirus BTB/WD family.

This is Putative BTB/POZ domain-containing protein L742 from Acanthamoeba polyphaga mimivirus (APMV).